A 107-amino-acid chain; its full sequence is Nucleoid-associated protein MCA1327 (107 aa).

This sequence belongs to the YbaB/EbfC family. Homodimer.

It is found in the cytoplasm. The protein localises to the nucleoid. Its function is as follows. Binds to DNA and alters its conformation. May be involved in regulation of gene expression, nucleoid organization and DNA protection. The chain is Nucleoid-associated protein MCA1327 from Methylococcus capsulatus (strain ATCC 33009 / NCIMB 11132 / Bath).